We begin with the raw amino-acid sequence, 84 residues long: Protein Tlp homolog (84 aa).

The disordered stretch occupies residues 1–20 (MGKEERYTKKPKPDDRSDNV).

This sequence belongs to the Tlp family.

This is Protein Tlp homolog from Caldanaerobacter subterraneus subsp. tengcongensis (strain DSM 15242 / JCM 11007 / NBRC 100824 / MB4) (Thermoanaerobacter tengcongensis).